The primary structure comprises 478 residues: PTS system mannitol-specific EIICB component (478 aa).

Over 1–29 (MQQQEQQQGGMKVKVQRFGSYLSGMIMPN) the chain is Cytoplasmic. Positions 18–347 (FGSYLSGMIM…VILKSSKASE (330 aa)) constitute a PTS EIIC type-2 domain. Residues 30-51 (IGAFIAWGIITALFIPAGWFPN) form a helical membrane-spanning segment. The Extracellular portion of the chain corresponds to 52 to 55 (EQLN). A helical membrane pass occupies residues 56-76 (TLVSPMITYLLPLLIAYTGGK). The Cytoplasmic portion of the chain corresponds to 77–139 (MIYDHRGGVV…QGFEMLINNF (63 aa)). The helical transmembrane segment at 140 to 161 (TAGIVGAALTILAFYAIGPVVL) threads the bilayer. The Extracellular portion of the chain corresponds to 162 to 170 (TLNKLLAAG). Residues 171-191 (VEVIVHANLLPVASVFVEPAK) form a helical membrane-spanning segment. Residues 192–278 (VLFLNNAINH…ILMKPALILA (87 aa)) lie on the Cytoplasmic side of the membrane. The chain crosses the membrane as a helical span at residues 279 to 298 (AIAGGASGLLTFTIFNAGLV). The Extracellular portion of the chain corresponds to 299–318 (AAASPGSIIALMAMTPRGGY). The helical transmembrane segment at 319 to 340 (FGVLAGVLVAAAVSFIVSAVIL) threads the bilayer. At 341–478 (KSSKASEEDL…YDELIEKLKK (138 aa)) the chain is on the cytoplasmic side. A PTS EIIB type-2 domain is found at 390 to 478 (NKIIFACDAG…YDELIEKLKK (89 aa)). Cys-396 acts as the Phosphocysteine intermediate; for EIIB activity in catalysis. Cys-396 is modified (phosphocysteine; by EIIA).

Homodimer.

The protein localises to the cell membrane. It catalyses the reaction D-mannitol(out) + N(pros)-phospho-L-histidyl-[protein] = D-mannitol 1-phosphate(in) + L-histidyl-[protein]. Its function is as follows. The phosphoenolpyruvate-dependent sugar phosphotransferase system (sugar PTS), a major carbohydrate active transport system, catalyzes the phosphorylation of incoming sugar substrates concomitantly with their translocation across the cell membrane. The enzyme II CmtAB PTS system is involved in D-mannitol transport. The polypeptide is PTS system mannitol-specific EIICB component (Bacillus subtilis (strain 168)).